We begin with the raw amino-acid sequence, 170 residues long: MDLKRFIRDIPDFPQKGIVFRDITPLLRNQEAFKEAIDRMCELVFDKEFDLVVAPEARGFILGAAMAYKLGKGFVPVRKPGKLPYKTVYEEYQLEYGTEQLHIHEDAIEKGQKVLIVDDVLATGGTAEALIRLVKKLGGEVVSLAFLVELSYLEPRKRLEGYDVKTLIVY.

It belongs to the purine/pyrimidine phosphoribosyltransferase family. Homodimer.

It localises to the cytoplasm. It carries out the reaction AMP + diphosphate = 5-phospho-alpha-D-ribose 1-diphosphate + adenine. The protein operates within purine metabolism; AMP biosynthesis via salvage pathway; AMP from adenine: step 1/1. Functionally, catalyzes a salvage reaction resulting in the formation of AMP, that is energically less costly than de novo synthesis. In Thermotoga sp. (strain RQ2), this protein is Adenine phosphoribosyltransferase.